Reading from the N-terminus, the 212-residue chain is Pyridoxine/pyridoxamine 5'-phosphate oxidase (212 aa).

Residues 8-11 and K66 each bind substrate; that span reads RRTY. Residues 61–66, 76–77, R82, K83, and Q105 contribute to the FMN site; these read RIVLLK and FT. Substrate contacts are provided by Y123, R127, and S131. FMN contacts are provided by residues 140 to 141 and W184; that span reads QS. 190–192 is a substrate binding site; that stretch reads RLH. R194 is a binding site for FMN.

It belongs to the pyridoxamine 5'-phosphate oxidase family. In terms of assembly, homodimer. It depends on FMN as a cofactor.

The enzyme catalyses pyridoxamine 5'-phosphate + O2 + H2O = pyridoxal 5'-phosphate + H2O2 + NH4(+). It carries out the reaction pyridoxine 5'-phosphate + O2 = pyridoxal 5'-phosphate + H2O2. It functions in the pathway cofactor metabolism; pyridoxal 5'-phosphate salvage; pyridoxal 5'-phosphate from pyridoxamine 5'-phosphate: step 1/1. Its pathway is cofactor metabolism; pyridoxal 5'-phosphate salvage; pyridoxal 5'-phosphate from pyridoxine 5'-phosphate: step 1/1. In terms of biological role, catalyzes the oxidation of either pyridoxine 5'-phosphate (PNP) or pyridoxamine 5'-phosphate (PMP) into pyridoxal 5'-phosphate (PLP). In Cupriavidus pinatubonensis (strain JMP 134 / LMG 1197) (Cupriavidus necator (strain JMP 134)), this protein is Pyridoxine/pyridoxamine 5'-phosphate oxidase.